The following is a 682-amino-acid chain: Methionine--tRNA ligase (682 aa).

The 'HIGH' region signature appears at 12-22 (PYANGAIHLGH). C143, C146, C156, and C159 together coordinate Zn(2+). The 'KMSKS' region signature appears at 328 to 332 (KMSKS). K331 contacts ATP. In terms of domain architecture, tRNA-binding spans 580-682 (DFAKLDLRVA…EGIRPGMQVK (103 aa)).

Belongs to the class-I aminoacyl-tRNA synthetase family. MetG type 1 subfamily. In terms of assembly, homodimer. The cofactor is Zn(2+).

It is found in the cytoplasm. It carries out the reaction tRNA(Met) + L-methionine + ATP = L-methionyl-tRNA(Met) + AMP + diphosphate. Is required not only for elongation of protein synthesis but also for the initiation of all mRNA translation through initiator tRNA(fMet) aminoacylation. The protein is Methionine--tRNA ligase of Actinobacillus pleuropneumoniae serotype 7 (strain AP76).